We begin with the raw amino-acid sequence, 476 residues long: Ribulose bisphosphate carboxylase large chain (476 aa).

Positions 1-2 are excised as a propeptide; that stretch reads MS. Proline 3 carries the post-translational modification N-acetylproline. Lysine 14 is subject to N6,N6,N6-trimethyllysine. Residues asparagine 123 and threonine 173 each contribute to the substrate site. Lysine 175 acts as the Proton acceptor in catalysis. Lysine 177 provides a ligand contact to substrate. Residues lysine 201, aspartate 203, and glutamate 204 each coordinate Mg(2+). N6-carboxylysine is present on lysine 201. Substrate-binding residues include arginine 295, histidine 327, and serine 379.

This sequence belongs to the RuBisCO large chain family. Type I subfamily. As to quaternary structure, heterohexadecamer of 8 large chains and 8 small chains; disulfide-linked. The disulfide link is formed within the large subunit homodimers. The cofactor is Mg(2+). The disulfide bond which can form in the large chain dimeric partners within the hexadecamer appears to be associated with oxidative stress and protein turnover.

It localises to the plastid. The protein resides in the chloroplast. The catalysed reaction is 2 (2R)-3-phosphoglycerate + 2 H(+) = D-ribulose 1,5-bisphosphate + CO2 + H2O. The enzyme catalyses D-ribulose 1,5-bisphosphate + O2 = 2-phosphoglycolate + (2R)-3-phosphoglycerate + 2 H(+). In terms of biological role, ruBisCO catalyzes two reactions: the carboxylation of D-ribulose 1,5-bisphosphate, the primary event in carbon dioxide fixation, as well as the oxidative fragmentation of the pentose substrate in the photorespiration process. Both reactions occur simultaneously and in competition at the same active site. The protein is Ribulose bisphosphate carboxylase large chain of Barnadesia caryophylla (Xenophontia caryophylla).